The chain runs to 181 residues: Acireductone dioxygenase (181 aa).

Residues His100, His102, Glu106, and His145 each contribute to the Fe(2+) site. Residues His100, His102, Glu106, and His145 each contribute to the Ni(2+) site.

It belongs to the acireductone dioxygenase (ARD) family. In terms of assembly, monomer. The cofactor is Fe(2+). Ni(2+) serves as cofactor.

The enzyme catalyses 1,2-dihydroxy-5-(methylsulfanyl)pent-1-en-3-one + O2 = 3-(methylsulfanyl)propanoate + CO + formate + 2 H(+). It carries out the reaction 1,2-dihydroxy-5-(methylsulfanyl)pent-1-en-3-one + O2 = 4-methylsulfanyl-2-oxobutanoate + formate + 2 H(+). It participates in amino-acid biosynthesis; L-methionine biosynthesis via salvage pathway; L-methionine from S-methyl-5-thio-alpha-D-ribose 1-phosphate: step 5/6. Its function is as follows. Catalyzes 2 different reactions between oxygen and the acireductone 1,2-dihydroxy-3-keto-5-methylthiopentene (DHK-MTPene) depending upon the metal bound in the active site. Fe-containing acireductone dioxygenase (Fe-ARD) produces formate and 2-keto-4-methylthiobutyrate (KMTB), the alpha-ketoacid precursor of methionine in the methionine recycle pathway. Ni-containing acireductone dioxygenase (Ni-ARD) produces methylthiopropionate, carbon monoxide and formate, and does not lie on the methionine recycle pathway. This Trichodesmium erythraeum (strain IMS101) protein is Acireductone dioxygenase.